Here is a 392-residue protein sequence, read N- to C-terminus: Ceramide phosphoethanolamine synthase (392 aa).

At 1–10 (MIGPSSQISK) the chain is on the lumenal side. A helical membrane pass occupies residues 11 to 31 (ILLTLLFLLIIFYVFMDVELY). At 32 to 140 (LRIHNYAIER…MFDNVIGFSR (109 aa)) the chain is on the cytoplasmic side. Residues 59-82 (SESGSGSIGGSSSSSSSSSSSTST) are compositionally biased toward low complexity. Residues 59–91 (SESGSGSIGGSSSSSSSSSSSTSTKLPTAGDRQ) form a disordered region. A helical membrane pass occupies residues 141–161 (STFITPNMISFFHVGVACLAG). Residues 162–212 (KLVASDSLGYRRLGVLLFQIRTFLDDLDGHVARVRKHIRGERSEIGTSGYY) are Lumenal-facing. Residues 213–233 (VDGLCDGLGCIALLLGIFFYL) form a helical membrane-spanning segment. At 234–271 (KNNPPRRGYSIIPMSDSKLPEPTMMIPKMKATTRKVAK) the chain is on the cytoplasmic side. Residues 272-288 (NVISFTGQLLLSSTAWN) form a helical membrane-spanning segment. Over 289–319 (RYIAVYQNMLEREDVSGNQSHCQDYVFKSTW) the chain is Lumenal. A helical membrane pass occupies residues 320 to 340 (FFCVAWMWRIVNVHALLHCVL). The Cytoplasmic portion of the chain corresponds to 341 to 356 (LSIFCDKLWDFLRAIR). A helical transmembrane segment spans residues 357–377 (YSGYIILLVAICLTEMHILEA). Over 378 to 392 (QNYIFNSTACSNISL) the chain is Lumenal.

The protein belongs to the CDP-alcohol phosphatidyltransferase class-I family. Requires Mn(2+) as cofactor.

The protein localises to the membrane. The protein resides in the golgi apparatus membrane. Its subcellular location is the cell membrane. It catalyses the reaction CDP-ethanolamine + an N-acylsphing-4-enine = an N-acylsphing-4-enine 1-phosphoethanolamine + CMP + H(+). It carries out the reaction CDP-ethanolamine + an N-acyl-sphingoid base = an N-acyl-sphingoid 1-phosphoethanolamine + CMP + H(+). Functionally, catalyzes the biosynthesis of ceramide phosphoethanolamine (CPE) through the transfer of a phosphatidyl head group from cytidine 5'-diphosphate (CDP)-ethanolamine on to the primary hydroxyl of ceramide. This Drosophila melanogaster (Fruit fly) protein is Ceramide phosphoethanolamine synthase.